Consider the following 242-residue polypeptide: Probable transcriptional regulatory protein XOO1543 (242 aa).

Belongs to the TACO1 family.

It localises to the cytoplasm. The sequence is that of Probable transcriptional regulatory protein XOO1543 from Xanthomonas oryzae pv. oryzae (strain MAFF 311018).